We begin with the raw amino-acid sequence, 386 residues long: Succinate--CoA ligase [ADP-forming] subunit beta (386 aa).

Positions 9–244 (KALFREHGIP…ETQEDAREAR (236 aa)) constitute an ATP-grasp domain. Residues Lys46, 53 to 55 (GRG), Glu99, Thr102, and Glu107 contribute to the ATP site. Mg(2+)-binding residues include Asn199 and Asp213. Residues Asn264 and 321–323 (GIV) each bind substrate.

It belongs to the succinate/malate CoA ligase beta subunit family. In terms of assembly, heterotetramer of two alpha and two beta subunits. It depends on Mg(2+) as a cofactor.

It carries out the reaction succinate + ATP + CoA = succinyl-CoA + ADP + phosphate. The enzyme catalyses GTP + succinate + CoA = succinyl-CoA + GDP + phosphate. It participates in carbohydrate metabolism; tricarboxylic acid cycle; succinate from succinyl-CoA (ligase route): step 1/1. Its function is as follows. Succinyl-CoA synthetase functions in the citric acid cycle (TCA), coupling the hydrolysis of succinyl-CoA to the synthesis of either ATP or GTP and thus represents the only step of substrate-level phosphorylation in the TCA. The beta subunit provides nucleotide specificity of the enzyme and binds the substrate succinate, while the binding sites for coenzyme A and phosphate are found in the alpha subunit. In Thioalkalivibrio sulfidiphilus (strain HL-EbGR7), this protein is Succinate--CoA ligase [ADP-forming] subunit beta.